A 156-amino-acid polypeptide reads, in one-letter code: 6,7-dimethyl-8-ribityllumazine synthase (156 aa).

5-amino-6-(D-ribitylamino)uracil contacts are provided by residues Trp33, 64–66 (SVE), and 86–88 (VIL). 91–92 (ET) serves as a coordination point for (2S)-2-hydroxy-3-oxobutyl phosphate. His94 serves as the catalytic Proton donor. A 5-amino-6-(D-ribitylamino)uracil-binding site is contributed by Ile119. Arg133 contributes to the (2S)-2-hydroxy-3-oxobutyl phosphate binding site.

Belongs to the DMRL synthase family.

It carries out the reaction (2S)-2-hydroxy-3-oxobutyl phosphate + 5-amino-6-(D-ribitylamino)uracil = 6,7-dimethyl-8-(1-D-ribityl)lumazine + phosphate + 2 H2O + H(+). Its pathway is cofactor biosynthesis; riboflavin biosynthesis; riboflavin from 2-hydroxy-3-oxobutyl phosphate and 5-amino-6-(D-ribitylamino)uracil: step 1/2. Its function is as follows. Catalyzes the formation of 6,7-dimethyl-8-ribityllumazine by condensation of 5-amino-6-(D-ribitylamino)uracil with 3,4-dihydroxy-2-butanone 4-phosphate. This is the penultimate step in the biosynthesis of riboflavin. The protein is 6,7-dimethyl-8-ribityllumazine synthase of Tropheryma whipplei (strain TW08/27) (Whipple's bacillus).